The chain runs to 561 residues: Putative transport protein YbjL (561 aa).

The next 5 helical transmembrane spans lie at 8–28 (LLNGNYILLLFVVLALGLCLG), 32–52 (LGSVQLGNSIGVLVVSLLLGQ), 66–86 (FMLFIFCVGVEAGPNFFSIFF), 94–114 (MLALVMVGSALLIALGLGKLF), and 158–178 (NLSLGYALTYLIGLVSLIVGA). RCK C-terminal domains lie at 200–288 (RGLD…SFRN) and 292–373 (VFDR…RIGF). 5 consecutive transmembrane segments (helical) span residues 383-403 (LLAFCAFFIIGLMIGMITFQF), 406-426 (FSFGIGNAAGLLFAGIMLGFL), 447-467 (FGLMVFMAGVGLSAGSGINNG), 475-495 (MLIAGLVVSLVPVVICFLFGA), and 537-557 (GTYAIANVLLTLAGTLIVIIW).

Belongs to the AAE transporter (TC 2.A.81) family. YbjL subfamily.

The protein resides in the cell membrane. The sequence is that of Putative transport protein YbjL from Salmonella choleraesuis (strain SC-B67).